An 823-amino-acid polypeptide reads, in one-letter code: Ankyrin repeat domain-containing protein 20B (823 aa).

ANK repeat units lie at residues 32–65, 66–95, 99–128, 132–161, 165–194, and 198–227; these read SELQ…ARDK, QHRT…QIDI, ENRT…NPNL, YGNT…HIEA, DSNT…STHA, and LRRS…DVFA. Disordered regions lie at residues 302-343 and 355-401; these read PEKV…GVED and VQTL…QLSE. Residues 372 to 382 are compositionally biased toward basic and acidic residues; sequence QERHERSEKKQ. Coiled-coil stretches lie at residues 431–480, 565–724, and 776–805; these read KKLK…KQLE, EMIT…NNST, and LVLE…EKAE.

This chain is Ankyrin repeat domain-containing protein 20B (ANKRD20A8P), found in Homo sapiens (Human).